Here is a 504-residue protein sequence, read N- to C-terminus: Glycerol kinase (504 aa).

Residue Thr-13 participates in ADP binding. Residues Thr-13, Thr-14, and Ser-15 each coordinate ATP. Thr-13 is a sn-glycerol 3-phosphate binding site. An ADP-binding site is contributed by Arg-17. Arg-83, Glu-84, and Tyr-135 together coordinate sn-glycerol 3-phosphate. Glycerol-binding residues include Arg-83, Glu-84, and Tyr-135. The residue at position 231 (His-231) is a Phosphohistidine; by HPr. Asp-245 serves as a coordination point for sn-glycerol 3-phosphate. Glycerol is bound by residues Asp-245 and Gln-246. The ADP site is built by Thr-267 and Gly-310. ATP is bound by residues Thr-267, Gly-310, Gln-314, and Gly-411. Positions 411 and 415 each coordinate ADP.

It belongs to the FGGY kinase family. Homotetramer and homodimer (in equilibrium). Post-translationally, the phosphoenolpyruvate-dependent sugar phosphotransferase system (PTS), including enzyme I, and histidine-containing protein (HPr) are required for the phosphorylation, which leads to the activation of the enzyme.

It carries out the reaction glycerol + ATP = sn-glycerol 3-phosphate + ADP + H(+). It functions in the pathway polyol metabolism; glycerol degradation via glycerol kinase pathway; sn-glycerol 3-phosphate from glycerol: step 1/1. Its activity is regulated as follows. Activated by phosphorylation and inhibited by fructose 1,6-bisphosphate (FBP). Key enzyme in the regulation of glycerol uptake and metabolism. Catalyzes the phosphorylation of glycerol to yield sn-glycerol 3-phosphate. The sequence is that of Glycerol kinase from Pediococcus pentosaceus (strain ATCC 25745 / CCUG 21536 / LMG 10740 / 183-1w).